A 4454-amino-acid polypeptide reads, in one-letter code: E3 ubiquitin-protein ligase HUWE1 (4454 aa).

The segment at 521–575 is disordered; sequence RASSSNSSTSISGPGPGPGPGPGPGPGPGPGPGPGPGLGPSLGPGPGPGPRPGVQ. Low complexity predominate over residues 523 to 533; that stretch reads SSSNSSTSISG. Positions 535–571 are enriched in pro residues; sequence GPGPGPGPGPGPGPGPGPGPGPGLGPSLGPGPGPGPR. Residues Ser724 and Ser725 each carry the phosphoserine modification. 3 disordered regions span residues 781–834, 1054–1077, and 1094–1114; these read QKAD…VVGT, DEKA…AGSM, and TLAP…KSKI. The span at 801–811 shows a compositional bias: acidic residues; that stretch reads ASSEDEEEEEV. Positions 813-832 are enriched in polar residues; the sequence is AMQSFNSAQQNETEPNQQVV. At Ser816 the chain carries Phosphoserine. Ser1160 carries the phosphoserine modification. The span at 1367–1378 shows a compositional bias: basic and acidic residues; sequence LSKEKEGSRGEE. The segment at 1367-1396 is disordered; sequence LSKEKEGSRGEEEAGQEEGGSRREPQVNQQ. Positions 1392–1431 constitute a UBA domain; it reads QVNQQQLQQLMDMGFTREHAMEALLNTSTMEQATEYLLTH. Phosphoserine occurs at positions 1444, 1446, 1458, and 1471. One can recognise a UIM domain in the interval 1446-1465; it reads SEEDQMMRAIAMSLGQDIPM. Residues 1472 to 1491 form a disordered region; sequence PEEVACRKEEEERKAREKQE. The region spanning 1679-1756 is the WWE domain; sequence RAQMTKYLQS…ETGNRRPVML (78 aa). Positions 1766–1802 are disordered; sequence KNSKSSNGQELEKTLEESKETDIKRKENKGNDIPLAL. Residues 1775 to 1795 show a composition bias toward basic and acidic residues; it reads ELEKTLEESKETDIKRKENKG. Position 1983 is a phosphoserine (Ser1983). Disordered stretches follow at residues 2095–2142, 2339–2420, and 2433–2556; these read APAE…SKPL, SLFG…QEMQ, and LERD…ASPL. The span at 2097-2112 shows a compositional bias: low complexity; that stretch reads AETSTTGTSQGEGAST. Thr2112 is modified (phosphothreonine). The span at 2114–2134 shows a compositional bias: basic and acidic residues; it reads EETREGKKDKEGDRTSEEGKQ. Positions 2339–2368 are enriched in low complexity; it reads SLFGSKSASSKSKSEQDAQGASQDSSSHQQ. Ser2343 carries the post-translational modification Phosphoserine. Lys2344 is subject to N6-acetyllysine. Composition is skewed to acidic residues over residues 2372-2383 and 2391-2402; these read EPGEAEVQEEDH and ADGDIMDGEAET. Residues Ser2439, Ser2442, and Ser2468 each carry the phosphoserine modification. Residues 2465–2475 show a composition bias toward polar residues; sequence SNLSQASTLQA. A compositionally biased stretch (acidic residues) spans 2485–2549; it reads DPEDEEEHTQ…SEMELDEDYP (65 aa). A phosphoserine mark is found at Ser2604, Ser2609, and Ser2612. Thr2631 carries the post-translational modification Phosphothreonine. 3 positions are modified to phosphoserine: Ser2661, Ser2672, and Ser2696. The span at 2781–2793 shows a compositional bias: basic and acidic residues; it reads IIDKGKEDKENRD. Disordered regions lie at residues 2781-3047 and 3113-3136; these read IIDK…GVDP and QQRA…MDPV. The segment covering 2794–2813 has biased composition (polar residues); that stretch reads QSAQCTVSKTNDSTEQNVSD. Low complexity predominate over residues 2815–2849; it reads TPMPDSYPTTPSSTDAPTSESKETLGTLQPSQQQP. Phosphothreonine is present on Thr2828. Composition is skewed to polar residues over residues 2895–2912, 2924–2941, and 2954–2967; these read AETT…TSLS, AVSS…SLAS, and AGSS…SSTP. Ser2903, Ser2910, Ser2912, Ser2938, Ser2964, and Ser2965 each carry phosphoserine. Thr2966 is modified (phosphothreonine). Residues 2990–3009 are compositionally biased toward low complexity; sequence PPEDSSPPASSESSSTRDSA. Ser2995 carries the phosphoserine modification. Ser3193, Ser3194, Ser3199, Ser3204, and Ser3212 each carry phosphoserine. Arg3226 carries the post-translational modification Omega-N-methylarginine. Disordered regions lie at residues 3320-3343, 3431-3458, 3482-3501, 3548-3590, and 3615-3642; these read PKLS…SHEN, QRTK…SQSS, GKNS…ETSL, SEVQ…TTPV, and TPTT…EGGS. Basic and acidic residues predominate over residues 3432 to 3446; sequence RTKETNCESDRERGS. The span at 3447 to 3458 shows a compositional bias: low complexity; sequence KQACSPCSSQSS. 2 stretches are compositionally biased toward low complexity: residues 3552–3579 and 3615–3628; these read TNSS…ATAP and TPTT…TSTT. 6 positions are modified to phosphoserine: Ser3633, Ser3740, Ser3830, Ser3835, Ser3837, and Ser3838. Residues 3815 to 3836 are disordered; that stretch reads TRRANKKAKQTGRLGSSGLGSA. Positions 3826–3836 are enriched in low complexity; sequence GRLGSSGLGSA. Disordered regions lie at residues 3859–3927 and 3974–4028; these read EGQR…LPLL and RESK…SSSL. Positions 3871–3880 are enriched in polar residues; it reads TSESSNQSET. 3 positions are modified to phosphoserine: Ser3887, Ser3895, and Ser3907. The span at 3894-3905 shows a compositional bias: polar residues; it reads PSPSAQDTQSIV. Thr3910 carries the phosphothreonine modification. Composition is skewed to basic and acidic residues over residues 3913 to 3922 and 3974 to 3995; these read GEKEKEERPP and RESK…KDEP. 2 positions are modified to phosphoserine: Ser3986 and Ser3999. A compositionally biased stretch (pro residues) spans 3996 to 4005; the sequence is PPLSPAPLTP. Thr4004 and Thr4007 each carry phosphothreonine. A compositionally biased stretch (polar residues) spans 4018 to 4028; it reads EPSSMHISSSL. Positions 4118 to 4454 constitute an HECT domain; that stretch reads SPEEMKNRLY…QECSEGFGLA (337 aa). The residue at position 4351 (Tyr4351) is a Phosphotyrosine. Cys4421 (glycyl thioester intermediate) is an active-site residue.

This sequence belongs to the UPL family. TOM1/PTR1 subfamily. In terms of assembly, interacts with isoform p14ARF of CDKN2A which strongly inhibits HUWE1 ubiquitin ligase activity. Interacts with MYCN, POLB and CDC6. Interacts with isoform 2 of PA2G4. Interacts with NR1D1. Interacts with AMBRA1. Interacts with HAPSTR1. Interacts with HAPSTR2. In hepatocytes, interacts with PAQR3; the interaction promotes PPARA poylubiquitination and STUB1-mediated degradation. Post-translationally, phosphorylated on tyrosine, phosphorylation is probably required for its ability to inhibit TP53 transactivation. In terms of tissue distribution, widely expressed.

It is found in the cytoplasm. It localises to the nucleus. Its subcellular location is the mitochondrion. The enzyme catalyses S-ubiquitinyl-[E2 ubiquitin-conjugating enzyme]-L-cysteine + [acceptor protein]-L-lysine = [E2 ubiquitin-conjugating enzyme]-L-cysteine + N(6)-ubiquitinyl-[acceptor protein]-L-lysine.. It functions in the pathway protein modification; protein ubiquitination. Functionally, E3 ubiquitin-protein ligase which mediates ubiquitination and subsequent proteasomal degradation of target proteins. Regulates apoptosis by catalyzing the polyubiquitination and degradation of MCL1. Mediates monoubiquitination of DNA polymerase beta (POLB) at 'Lys-41', 'Lys-61' and 'Lys-81', thereby playing a role in base-excision repair. Also ubiquitinates the p53/TP53 tumor suppressor and core histones including H1, H2A, H2B, H3 and H4. Ubiquitinates MFN2 to negatively regulate mitochondrial fusion in response to decreased stearoylation of TFRC. Ubiquitination of MFN2 also takes place following induction of mitophagy; AMBRA1 acts as a cofactor for HUWE1-mediated ubiquitination. Regulates neural differentiation and proliferation by catalyzing the polyubiquitination and degradation of MYCN. May regulate abundance of CDC6 after DNA damage by polyubiquitinating and targeting CDC6 to degradation. Mediates polyubiquitination of PA2G4. Acts in concert with MYCBP2 to regulate the circadian clock gene expression by promoting the lithium-induced ubiquination and degradation of NR1D1. Binds to an upstream initiator-like sequence in the preprodynorphin gene. Mediates HAPSTR1 degradation, but is also a required cofactor in the pathway by which HAPSTR1 governs stress signaling. Acts as a regulator of the JNK and NF-kappa-B signaling pathways by mediating assembly of heterotypic 'Lys-63'-/'Lys-48'-linked branched ubiquitin chains that are then recognized by TAB2: HUWE1 mediates branching of 'Lys-48'-linked chains of substrates initially modified with 'Lys-63'-linked conjugates by TRAF6. 'Lys-63'-/'Lys-48'-linked branched ubiquitin chains protect 'Lys-63'-linkages from CYLD deubiquitination. Ubiquitinates PPARA in hepatocytes. The protein is E3 ubiquitin-protein ligase HUWE1 (Huwe1) of Rattus norvegicus (Rat).